The following is a 352-amino-acid chain: tRNA N6-adenosine threonylcarbamoyltransferase (352 aa).

Fe cation is bound by residues His-115 and His-119. Residues 138-142 (LVSGG), Asp-171, Gly-184, and Asn-276 each bind substrate. Asp-304 provides a ligand contact to Fe cation.

It belongs to the KAE1 / TsaD family. Requires Fe(2+) as cofactor.

It is found in the cytoplasm. It carries out the reaction L-threonylcarbamoyladenylate + adenosine(37) in tRNA = N(6)-L-threonylcarbamoyladenosine(37) in tRNA + AMP + H(+). Its function is as follows. Required for the formation of a threonylcarbamoyl group on adenosine at position 37 (t(6)A37) in tRNAs that read codons beginning with adenine. Is involved in the transfer of the threonylcarbamoyl moiety of threonylcarbamoyl-AMP (TC-AMP) to the N6 group of A37, together with TsaE and TsaB. TsaD likely plays a direct catalytic role in this reaction. The protein is tRNA N6-adenosine threonylcarbamoyltransferase of Xanthomonas axonopodis pv. citri (strain 306).